Consider the following 438-residue polypeptide: MAQFFKPKKKASVNTKHLSVDVVRLDHNGAGIAFVDKKPVFIEGALPGEKAIIQFIEQKKQFSRAKLIKLAQKSEKRQTPICQHYHECGGCNLQHLQHEEQIVAKNEKLQELMKKQGVSQGEMVQPIMGEELSYRRRARISLMINKQTNQLDFGFRKKQSKAIVNVRHCPVLVQELDQHLESLFTLLNQLKGKKNLGHVELVQADNGSVLLIRHVADFNEKDHQALVNYCEERNLILYLMPEADVLNHVRGEEPFYLIDGTKIYFTPKDFIQVNRKVNEQMVEQALSWLDLNENDSVLDLFCGLGNFSLPLAKKVKTVVGIEGVDDMVQRAKLNAERNHLSNVSFYQANLEEEASDQVWASTKFTKILLDPARAGAAGVMETVAKLKPQTVVYVSCNPATLARDSQLLIQHGFKLTRLGMLDMFPHTGHLESMALFER.

A TRAM domain is found at 10-69 (KASVNTKHLSVDVVRLDHNGAGIAFVDKKPVFIEGALPGEKAIIQFIEQKKQFSRAKLIK). Positions 82, 88, 91, and 169 each coordinate [4Fe-4S] cluster. Positions 272, 301, 306, 322, 349, and 370 each coordinate S-adenosyl-L-methionine. The active-site Nucleophile is Cys396.

This sequence belongs to the class I-like SAM-binding methyltransferase superfamily. RNA M5U methyltransferase family. RlmD subfamily.

The catalysed reaction is uridine(1939) in 23S rRNA + S-adenosyl-L-methionine = 5-methyluridine(1939) in 23S rRNA + S-adenosyl-L-homocysteine + H(+). Its function is as follows. Catalyzes the formation of 5-methyl-uridine at position 1939 (m5U1939) in 23S rRNA. This Aliivibrio fischeri (strain MJ11) (Vibrio fischeri) protein is 23S rRNA (uracil(1939)-C(5))-methyltransferase RlmD.